Here is a 181-residue protein sequence, read N- to C-terminus: Insulin-like growth factor 2 (181 aa).

The signal sequence occupies residues 1–24; sequence MGIPVGKSLLMLFTFLAFASCCIA. The interval 25-52 is b; that stretch reads AYRPSETLCGGELVDTLQFVCGDRGFYF. 3 disulfide bridges follow: cysteine 33–cysteine 71, cysteine 45–cysteine 84, and cysteine 70–cysteine 75. The segment at 53-64 is c; sequence SRPASRINRRSR. The segment at 65-85 is a; that stretch reads GIVEECCFRSCDLALLETYCA. The d stretch occupies residues 86–91; that stretch reads TPAKSE. Residues 92–181 constitute a propeptide, e peptide; that stretch reads RDVSTPPTVL…AFVEVSSDLQ (90 aa). An O-linked (GalNAc...) threonine glycan is attached at threonine 163.

This sequence belongs to the insulin family. As to quaternary structure, interacts with MYORG; this interaction is required for IGF2 secretion. Interacts with integrins ITGAV:ITGB3 and ITGA6:ITGB4; integrin-binding is required for IGF2 signaling. Interacts with IGFBP2. Proteolytically processed by PCSK4, proIGF2 is cleaved at Arg-128 and Arg-92 to generate big-IGF2 and mature IGF2.

The protein resides in the secreted. Functionally, the insulin-like growth factors possess growth-promoting activity. Major fetal growth hormone in mammals. Plays a key role in regulating fetoplacental development. IGF2 is influenced by placental lactogen. Also involved in tissue differentiation. In adults, involved in glucose metabolism in adipose tissue, skeletal muscle and liver. Acts as a ligand for integrin which is required for IGF2 signaling. Positively regulates myogenic transcription factor MYOD1 function by facilitating the recruitment of transcriptional coactivators, thereby controlling muscle terminal differentiation. Inhibits myoblast differentiation and modulates metabolism via increasing the mitochondrial respiration rate. In terms of biological role, preptin undergoes glucose-mediated co-secretion with insulin, and acts as a physiological amplifier of glucose-mediated insulin secretion. Exhibits osteogenic properties by increasing osteoblast mitogenic activity through phosphoactivation of MAPK1 and MAPK3. The polypeptide is Insulin-like growth factor 2 (Equus caballus (Horse)).